Consider the following 99-residue polypeptide: Protein Tat (99 aa).

The interval 1–20 (MELVDPNLDPWNHPGSQPTT) is disordered. Positions 1-24 (MELVDPNLDPWNHPGSQPTTPCTR) are interaction with human CREBBP. The segment at 1-48 (MELVDPNLDPWNHPGSQPTTPCTRCYCKWCCFHCYWCFTTKGLGISYG) is transactivation. Zn(2+) is bound by residues Cys22, Cys25, and Cys27. Positions 22 to 37 (CTRCYCKWCCFHCYWC) are cysteine-rich. Lys28 is modified (N6-acetyllysine; by host PCAF). Cys30, His33, Cys34, and Cys37 together coordinate Zn(2+). The tract at residues 38–48 (FTTKGLGISYG) is core. Positions 48 to 99 (GRKKRRQRPRTPQSSQIHQDFVPKQPISQARGNPTGPKESKKEVESKAKTDP) are disordered. Positions 49–57 (RKKRRQRPR) match the Nuclear localization signal, RNA-binding (TAR), and protein transduction motif. Residues 49 to 86 (RKKRRQRPRTPQSSQIHQDFVPKQPISQARGNPTGPKE) form an interaction with the host capping enzyme RNGTT region. N6-acetyllysine; by host EP300 and GCN5L2 occurs at positions 50 and 51. Arg52 and Arg53 each carry asymmetric dimethylarginine; by host PRMT6. Lys71 participates in a covalent cross-link: Glycyl lysine isopeptide (Lys-Gly) (interchain with G-Cter in ubiquitin). Residues 85-99 (KESKKEVESKAKTDP) show a composition bias toward basic and acidic residues.

The protein belongs to the lentiviruses Tat family. Interacts with host CCNT1. Associates with the P-TEFb complex composed at least of Tat, P-TEFb (CDK9 and CCNT1), TAR RNA, RNA Pol II. Recruits the HATs CREBBP, TAF1/TFIID, EP300, PCAF and GCN5L2. Interacts with host KAT5/Tip60; this interaction targets the latter to degradation. Interacts with the host deacetylase SIRT1. Interacts with host capping enzyme RNGTT; this interaction stimulates RNGTT. Binds to host KDR, and to the host integrins ITGAV/ITGB3 and ITGA5/ITGB1. Interacts with host KPNB1/importin beta-1 without previous binding to KPNA1/importin alpha-1. Interacts with EIF2AK2. Interacts with host nucleosome assembly protein NAP1L1; this interaction may be required for the transport of Tat within the nucleus, since the two proteins interact at the nuclear rim. Interacts with host C1QBP/SF2P32; this interaction involves lysine-acetylated Tat. Interacts with the host chemokine receptors CCR2, CCR3 and CXCR4. Interacts with host DPP4/CD26; this interaction may trigger an anti-proliferative effect. Interacts with host LDLR. Interacts with the host extracellular matrix metalloproteinase MMP1. Interacts with host PRMT6; this interaction mediates Tat's methylation. Interacts with, and is ubiquitinated by MDM2/Hdm2. Interacts with host PSMC3 and HTATIP2. Interacts with STAB1; this interaction may overcome SATB1-mediated repression of IL2 and IL2RA (interleukin) in T cells by binding to the same domain than HDAC1. Interacts (when acetylated) with human CDK13, thereby increasing HIV-1 mRNA splicing and promoting the production of the doubly spliced HIV-1 protein Nef. Interacts with host TBP; this interaction modulates the activity of transcriptional pre-initiation complex. Interacts with host RELA. Interacts with host PLSCR1; this interaction negatively regulates Tat transactivation activity by altering its subcellular distribution. Asymmetrical arginine methylation by host PRMT6 seems to diminish the transactivation capacity of Tat and affects the interaction with host CCNT1. Post-translationally, acetylation by EP300, CREBBP, GCN5L2/GCN5 and PCAF regulates the transactivation activity of Tat. EP300-mediated acetylation of Lys-50 promotes dissociation of Tat from the TAR RNA through the competitive binding to PCAF's bromodomain. In addition, the non-acetylated Tat's N-terminus can also interact with PCAF. PCAF-mediated acetylation of Lys-28 enhances Tat's binding to CCNT1. Lys-50 is deacetylated by SIRT1. In terms of processing, polyubiquitination by host MDM2 does not target Tat to degradation, but activates its transactivation function and fosters interaction with CCNT1 and TAR RNA. Phosphorylated by EIF2AK2 on serine and threonine residues adjacent to the basic region important for TAR RNA binding and function. Phosphorylation of Tat by EIF2AK2 is dependent on the prior activation of EIF2AK2 by dsRNA.

It localises to the host nucleus. The protein resides in the host nucleolus. Its subcellular location is the host cytoplasm. It is found in the secreted. In terms of biological role, transcriptional activator that increases RNA Pol II processivity, thereby increasing the level of full-length viral transcripts. Recognizes a hairpin structure at the 5'-LTR of the nascent viral mRNAs referred to as the transactivation responsive RNA element (TAR) and recruits the cyclin T1-CDK9 complex (P-TEFb complex) that will in turn hyperphosphorylate the RNA polymerase II to allow efficient elongation. The CDK9 component of P-TEFb and other Tat-activated kinases hyperphosphorylate the C-terminus of RNA Pol II that becomes stabilized and much more processive. Other factors such as HTATSF1/Tat-SF1, SUPT5H/SPT5, and HTATIP2 are also important for Tat's function. Besides its effect on RNA Pol II processivity, Tat induces chromatin remodeling of proviral genes by recruiting the histone acetyltransferases (HATs) CREBBP, EP300 and PCAF to the chromatin. This also contributes to the increase in proviral transcription rate, especially when the provirus integrates in transcriptionally silent region of the host genome. To ensure maximal activation of the LTR, Tat mediates nuclear translocation of NF-kappa-B by interacting with host RELA. Through its interaction with host TBP, Tat may also modulate transcription initiation. Tat can reactivate a latently infected cell by penetrating in it and transactivating its LTR promoter. In the cytoplasm, Tat is thought to act as a translational activator of HIV-1 mRNAs. Its function is as follows. Extracellular circulating Tat can be endocytosed by surrounding uninfected cells via the binding to several surface receptors such as CD26, CXCR4, heparan sulfate proteoglycans (HSPG) or LDLR. Neurons are rarely infected, but they internalize Tat via their LDLR. Through its interaction with nuclear HATs, Tat is potentially able to control the acetylation-dependent cellular gene expression. Modulates the expression of many cellular genes involved in cell survival, proliferation or in coding for cytokines or cytokine receptors. Tat plays a role in T-cell and neurons apoptosis. Tat induced neurotoxicity and apoptosis probably contribute to neuroAIDS. Circulating Tat also acts as a chemokine-like and/or growth factor-like molecule that binds to specific receptors on the surface of the cells, affecting many cellular pathways. In the vascular system, Tat binds to ITGAV/ITGB3 and ITGA5/ITGB1 integrins dimers at the surface of endothelial cells and competes with bFGF for heparin-binding sites, leading to an excess of soluble bFGF. This Homo sapiens (Human) protein is Protein Tat.